A 380-amino-acid chain; its full sequence is Outer membrane protein 40 (380 aa).

The N-terminal stretch at methionine 1–alanine 21 is a signal peptide. Residue glutamine 22 is modified to Pyrrolidone carboxylic acid. The OmpA-like domain occupies proline 270 to glutamate 380.

The protein belongs to the outer membrane OOP (TC 1.B.6) superfamily. In terms of assembly, disulfide-linked heterodimer with Omp41.

The protein resides in the cell outer membrane. Functionally, may have porin activity and function in peptidoglycan binding. The chain is Outer membrane protein 40 from Porphyromonas gingivalis (strain ATCC BAA-308 / W83).